Here is a 505-residue protein sequence, read N- to C-terminus: Prenylcysteine oxidase 1 (505 aa).

The N-terminal stretch at 1–27 (MGRVVAELVSSLLGLWLLLCSCGCPEG) is a signal peptide. Residues N196, N323, and N353 are each glycosylated (N-linked (GlcNAc...) asparagine).

Belongs to the prenylcysteine oxidase family. FAD serves as cofactor. In terms of tissue distribution, widely expressed.

Its subcellular location is the lysosome. The catalysed reaction is an S-polyprenyl-L-cysteine + O2 + H2O = a polyprenal + L-cysteine + H2O2. It catalyses the reaction S-(2E,6E)-farnesyl-L-cysteine + O2 + H2O = (2E,6E)-farnesal + L-cysteine + H2O2. The enzyme catalyses [(2E,6E,10E)-geranylgeranyl]-L-cysteine + O2 + H2O = (2E,6E,10E)-geranylgeranial + L-cysteine + H2O2. Its function is as follows. Prenylcysteine oxidase that cleaves the thioether bond of prenyl-L-cysteines, such as farnesylcysteine and geranylgeranylcysteine. Only active against free prenylcysteines and not prenylcysteine residues within prenylated proteins or peptides. Involved in the final step in the degradation of prenylated proteins, by degrading prenylcysteines after the protein has been degraded. This chain is Prenylcysteine oxidase 1, found in Homo sapiens (Human).